The primary structure comprises 191 residues: Cytochrome c biogenesis ATP-binding export protein CcmA (191 aa).

An ABC transporter domain is found at 2 to 190 (LSLHQLQFKN…SIKSAQILRI (189 aa)). 29-36 (GANGCGKS) is an ATP binding site.

The protein belongs to the ABC transporter superfamily. CcmA exporter (TC 3.A.1.107) family. The complex is composed of two ATP-binding proteins (CcmA) and two transmembrane proteins (CcmB).

The protein localises to the cell inner membrane. The catalysed reaction is heme b(in) + ATP + H2O = heme b(out) + ADP + phosphate + H(+). Functionally, part of the ABC transporter complex CcmAB involved in the biogenesis of c-type cytochromes; once thought to export heme, this seems not to be the case, but its exact role is uncertain. Responsible for energy coupling to the transport system. The polypeptide is Cytochrome c biogenesis ATP-binding export protein CcmA (Rickettsia conorii (strain ATCC VR-613 / Malish 7)).